The primary structure comprises 729 residues: Polyribonucleotide nucleotidyltransferase (729 aa).

Positions 510 and 516 each coordinate Mg(2+). The KH domain occupies proline 576 to isoleucine 635. One can recognise an S1 motif domain in the interval glycine 647–serine 719.

Belongs to the polyribonucleotide nucleotidyltransferase family. The cofactor is Mg(2+).

It localises to the cytoplasm. The enzyme catalyses RNA(n+1) + phosphate = RNA(n) + a ribonucleoside 5'-diphosphate. Functionally, involved in mRNA degradation. Catalyzes the phosphorolysis of single-stranded polyribonucleotides processively in the 3'- to 5'-direction. In Frankia alni (strain DSM 45986 / CECT 9034 / ACN14a), this protein is Polyribonucleotide nucleotidyltransferase.